We begin with the raw amino-acid sequence, 712 residues long: MEQEKRIFSIDWAGRPLVVEIGQLAKQANGAVLVRYGDTVVLNTATASKEAKNVDFFPLTVNYEERLYAVGKIPGGFIKREGRPSEKAILASRLIDRPIRPLFAEGFRNEVQIVSMVMSVDQDCSPEMAALFGASLALTISDIPFEGPIAGVTVGRVDGEFVINPTVEQSEKSDIHLVVAGTKDAINMVEAGADEVPEEVILEAIMFGHEEVKRLIAFQEEIAAQVGKEKMEVVLYELDPQLEAEIRQLAEEDIKRAVQVPEKLARDAAIEEVKASVIAKYEEQEADEETLKQVNEILHKLVKEEVRRLITEEKIRPDGRKIDEIRPLSSEVGVLPRTHGSGLFTRGQTQVLSVCTLGALGDVQILDGLGIEETKRFMHHYNFPPFSVGETGPMRGPGRREIGHGALGERALEPVVPSEKEFPYTIRLVSEVLESNGSTSQASICASTLAMMDAGVPIKAPVAGIAMGLVKNDDNYTILTDIQGIEDHLGDMDFKVAGTAKGVTALQMDIKIKGLSREILEEALQQAKKGRMEILEHMMQTIREPRKELSKYAPKILTMQINPEKIREVIGPSGKQINKIIDETGVKIDIEQDGTIFISSVNEAMNQKAKQIIEDIVREVEVGQIYLGKVKRIEKFGAFVELFNGKDGLVHISELAEERVGRVEDVVSIGDEILVKVMEIDKQGRVNLSRKAVLRDKKEKKGKRPERHRMKP.

2 residues coordinate Mg(2+): D487 and D493. Residues 554-613 enclose the KH domain; the sequence is PKILTMQINPEKIREVIGPSGKQINKIIDETGVKIDIEQDGTIFISSVNEAMNQKAKQII. In terms of domain architecture, S1 motif spans 623–691; sequence GQIYLGKVKR…KQGRVNLSRK (69 aa).

It belongs to the polyribonucleotide nucleotidyltransferase family. Mg(2+) is required as a cofactor.

It localises to the cytoplasm. It catalyses the reaction RNA(n+1) + phosphate = RNA(n) + a ribonucleoside 5'-diphosphate. Involved in mRNA degradation. Catalyzes the phosphorolysis of single-stranded polyribonucleotides processively in the 3'- to 5'-direction. This is Polyribonucleotide nucleotidyltransferase from Geobacillus sp. (strain WCH70).